A 346-amino-acid polypeptide reads, in one-letter code: dTDP-glucose 4,6-dehydratase (346 aa).

Residues 17 to 18, 38 to 41, 64 to 65, 86 to 90, and Thr105 each bind NAD(+); these read FI, DKLT, DI, and LAAES. Ser90 is a binding site for substrate. Thr139 is a binding site for substrate. Residue Asp140 is the Proton donor of the active site. Catalysis depends on proton acceptor residues Glu141 and Tyr165. 165 to 169 is a binding site for NAD(+); that stretch reads YSASK. Residue Asn194 participates in substrate binding. Asn195 lines the NAD(+) pocket. Substrate is bound by residues 204-205, 220-222, Arg229, Asn264, and 298-302; these read KL, PVY, and DRPGH.

This sequence belongs to the NAD(P)-dependent epimerase/dehydratase family. dTDP-glucose dehydratase subfamily. Homodimer. NAD(+) is required as a cofactor.

The enzyme catalyses dTDP-alpha-D-glucose = dTDP-4-dehydro-6-deoxy-alpha-D-glucose + H2O. It participates in carbohydrate biosynthesis; dTDP-L-rhamnose biosynthesis. It functions in the pathway bacterial outer membrane biogenesis; LPS O-antigen biosynthesis. Catalyzes the dehydration of dTDP-D-glucose to form dTDP-6-deoxy-D-xylo-4-hexulose via a three-step process involving oxidation, dehydration and reduction. The sequence is that of dTDP-glucose 4,6-dehydratase from Neisseria gonorrhoeae.